Reading from the N-terminus, the 136-residue chain is MARTKQTARKSTGAKVPRKHLSSKSSFPSKPVNEVLKKTHRFRPGTVALREIRRYQKSSDLLIKKLPFQRLVREIAQEFKTDLRFQAAAIEALQEATEAYLVGLFEDTNLCAIHAKRVTIMVKDIQLARRIRGERA.

Residues 1-30 (MARTKQTARKSTGAKVPRKHLSSKSSFPSK) are disordered. K5 carries the N6,N6,N6-trimethyllysine; by set1; alternate modification. Residue K5 is modified to N6,N6-dimethyllysine; by set1; alternate. 2 positions are modified to N6-acetyllysine; alternate: K5 and K10. K5 is subject to N6-methyllysine; by set1; alternate. At K10 the chain carries N6,N6,N6-trimethyllysine; alternate. Residue K10 is modified to N6,N6-dimethyllysine; alternate. K10 is subject to N6-methyllysine; alternate. A Phosphoserine modification is found at S11. Position 15 is an N6-acetyllysine (K15). Residues K19, K24, and K37 each carry the N6-acetyllysine; alternate modification. Residues K19, K24, and K37 each carry the N6-methyllysine; alternate modification. K37 bears the N6,N6,N6-trimethyllysine; alternate mark. K37 carries the N6,N6-dimethyllysine; alternate modification. K57 bears the N6-acetyllysine mark. At K80 the chain carries N6,N6,N6-trimethyllysine; alternate. N6,N6-dimethyllysine; alternate is present on K80. K80 is modified (N6-methyllysine; alternate).

This sequence belongs to the histone H3 family. As to quaternary structure, the nucleosome is a histone octamer containing two molecules each of H2A, H2B, H3 and H4 assembled in one H3-H4 heterotetramer and two H2A-H2B heterodimers. The octamer wraps approximately 147 bp of DNA. In terms of processing, acetylation is generally linked to gene activation. Post-translationally, different methylation states of H3K4 mark distinct developmental phases. H3K4me2 is associated with euchromatic regions. H3K4me3 is a mark of active chromatin. set1 is responsible for all mono-, di- and tri-methylation of H3K4. H3K4me facilitates subsequent acetylation of H3 and H4. Methylation at H3K9 is linked to gene repression. H3S10ph, which is linked to gene activation, prevents methylation at H3K9 but facilitates acetylation of H3 and H4.

It localises to the nucleus. The protein resides in the chromosome. Core component of nucleosome. Nucleosomes wrap and compact DNA into chromatin, limiting DNA accessibility to the cellular machineries which require DNA as a template. Histones thereby play a central role in transcription regulation, DNA repair, DNA replication and chromosomal stability. DNA accessibility is regulated via a complex set of post-translational modifications of histones, also called histone code, and nucleosome remodeling. This Dictyostelium discoideum (Social amoeba) protein is Histone H3.3 type c (H3c).